A 145-amino-acid polypeptide reads, in one-letter code: Protein AggB (145 aa).

A signal peptide spans 1–24; it reads MLKKSILPMSCGVLVMVMSGLLDA.

The protein to E.coli AfaD.

The chain is Protein AggB (aggB) from Escherichia coli.